The primary structure comprises 99 residues: uncharacterized protein (99 aa).

Residues 1 to 17 (MMMNAFFPAMALIVLVG) form the signal peptide. Cys-18 carries N-palmitoyl cysteine lipidation. Cys-18 is lipidated: S-diacylglycerol cysteine.

It is found in the cell membrane. This is an uncharacterized protein from Escherichia coli (strain UTI89 / UPEC).